The primary structure comprises 86 residues: Large ribosomal subunit protein uL23 (86 aa).

Belongs to the universal ribosomal protein uL23 family. In terms of assembly, part of the 50S ribosomal subunit. Contacts protein L29.

In terms of biological role, binds to 23S rRNA. One of the proteins that surrounds the polypeptide exit tunnel on the outside of the ribosome. In Aeropyrum pernix (strain ATCC 700893 / DSM 11879 / JCM 9820 / NBRC 100138 / K1), this protein is Large ribosomal subunit protein uL23.